A 145-amino-acid polypeptide reads, in one-letter code: Basic phospholipase A2 cPm05 (145 aa).

An N-terminal signal peptide occupies residues 1-21; that stretch reads MYPAHLLVLLAVCISLLGASA. Positions 22 to 27 are excised as a propeptide; that stretch reads IPPLPL. 7 cysteine pairs are disulfide-bonded: C38-C98, C54-C144, C56-C72, C71-C125, C78-C118, C87-C111, and C105-C116. Residues Y55, G57, and G59 each contribute to the Ca(2+) site. Residue H75 is part of the active site. D76 contributes to the Ca(2+) binding site. Residue D119 is part of the active site.

The protein belongs to the phospholipase A2 family. Group I subfamily. D49 sub-subfamily. The cofactor is Ca(2+). As to expression, expressed by the venom gland.

The protein localises to the secreted. The catalysed reaction is a 1,2-diacyl-sn-glycero-3-phosphocholine + H2O = a 1-acyl-sn-glycero-3-phosphocholine + a fatty acid + H(+). PLA2 catalyzes the calcium-dependent hydrolysis of the 2-acyl groups in 3-sn-phosphoglycerides. The polypeptide is Basic phospholipase A2 cPm05 (Laticauda semifasciata (Black-banded sea krait)).